The chain runs to 360 residues: D-alanine--D-alanine ligase (360 aa).

The ATP-grasp domain occupies 149–353; the sequence is KKLMAAEGLP…YEELLDVLVQ (205 aa). Residue 176–231 participates in ATP binding; the sequence is KNLLGLPVFVKPARGGSSIGISRVTAWEDFNKAVGLARAHDEKVIVESEIVGSEVE. Residues D308, E320, and N322 each coordinate Mg(2+).

Belongs to the D-alanine--D-alanine ligase family. The cofactor is Mg(2+). It depends on Mn(2+) as a cofactor.

The protein resides in the cytoplasm. The catalysed reaction is 2 D-alanine + ATP = D-alanyl-D-alanine + ADP + phosphate + H(+). Its pathway is cell wall biogenesis; peptidoglycan biosynthesis. Functionally, cell wall formation. This Corynebacterium glutamicum (strain R) protein is D-alanine--D-alanine ligase.